We begin with the raw amino-acid sequence, 334 residues long: Probable prephenate dehydratase (334 aa).

Residues 7-224 (RVLFLGPKGT…NTTRFLVLKR (218 aa)) form the Prephenate dehydratase domain. Residues 244–322 (LTFTTRQDDP…SDKSKQWCLW (79 aa)) enclose the ACT domain.

It is found in the cytoplasm. It carries out the reaction prephenate + H(+) = 3-phenylpyruvate + CO2 + H2O. It participates in amino-acid biosynthesis; L-phenylalanine biosynthesis; phenylpyruvate from prephenate: step 1/1. Catayzes the decarboxylation/dehydration of prephenate to phenylpyruvate. In Saccharomyces cerevisiae (strain ATCC 204508 / S288c) (Baker's yeast), this protein is Probable prephenate dehydratase (PHA2).